The following is a 907-amino-acid chain: Probable dipeptidyl-aminopeptidase B (907 aa).

The segment covering M1–D11 has biased composition (basic and acidic residues). A disordered region spans residues M1–L71. The Cytoplasmic portion of the chain corresponds to M1–R88. Low complexity predominate over residues S22 to S36. The helical; Signal-anchor for type II membrane protein transmembrane segment at A89–V109 threads the bilayer. Over S110–V907 the chain is Vacuolar. N-linked (GlcNAc...) asparagine glycans are attached at residues N185 and N341. The active-site Charge relay system is S746. N-linked (GlcNAc...) asparagine glycosylation is present at N800. Residues D823 and H856 each act as charge relay system in the active site.

Belongs to the peptidase S9B family.

The protein localises to the vacuole membrane. It catalyses the reaction Release of an N-terminal dipeptide, Xaa-Yaa-|-Zaa-, from a polypeptide, preferentially when Yaa is Pro, provided Zaa is neither Pro nor hydroxyproline.. Its function is as follows. Type IV dipeptidyl-peptidase which removes N-terminal dipeptides sequentially from polypeptides having unsubstituted N-termini provided that the penultimate residue is proline. This is Probable dipeptidyl-aminopeptidase B (DAPB) from Tuber melanosporum (strain Mel28) (Perigord black truffle).